A 442-amino-acid polypeptide reads, in one-letter code: Cell adhesion molecule 1 (442 aa).

Positions 1 to 44 (MASVVLPSGSQCAAAAAAAAPPGLRLRLLLLLFSAAALIPTGDG) are cleaved as a signal peptide. Residues 45–139 (QNLFTKDVTV…PPQESYTTIT (95 aa)) enclose the Ig-like V-type domain. Residues 45–374 (QNLFTKDVTV…EEGSIRAVDH (330 aa)) lie on the Extracellular side of the membrane. An intrachain disulfide couples Cys-64 to Cys-124. N-linked (GlcNAc...) asparagine glycans are attached at residues Asn-67, Asn-101, Asn-113, and Asn-165. 2 consecutive Ig-like C2-type domains span residues 144-238 (PRNL…RYLE) and 243-329 (PQVH…YMLY). Cystine bridges form between Cys-166–Cys-220 and Cys-267–Cys-313. Asn-304 and Asn-308 each carry an N-linked (GlcNAc...) asparagine glycan. Residues 375–395 (AVIGGVVAVVVFAMLCLLIIL) traverse the membrane as a helical segment. Residues 396–442 (GRYFARHKGTYFTHEAKGADDAADADTAIINAEGGQNNSEEKKEYFI) are Cytoplasmic-facing. Phosphothreonine is present on Thr-422. A Phosphoserine modification is found at Ser-434.

The protein belongs to the nectin family. In terms of assembly, homodimer (via Ig-like V-type domain). Interacts with FARP1. Interacts (via Ig-like V-type domain) with CRTAM (via Ig-like V-type domain); the interaction competes with CRTAM homodimerization and CADM1 homodimerization. Interacts (via C-terminus) with EPB41L3/DAL1. The interaction with EPB41L3/DAL1 may act to anchor CADM1 to the actin cytoskeleton. Interacts (via C-terminus) with MPP2 (via PDZ domain). Interacts (via C-terminus) with MPP3 (via PDZ domain); this interaction connects CADM1 with DLG1. Interacts (via C-terminus) with PALS2 (via PDZ domain). (Microbial infection) Interacts with herpes virus 8 proteins vFLIP and vGPCR; these interactions are essential for NF-kappa-B activation. Glycosylation at Asn-67 and Asn-101 promotes adhesive binding and synapse induction.

It localises to the cell membrane. The protein resides in the synapse. In terms of biological role, mediates homophilic cell-cell adhesion in a Ca(2+)-independent manner. Also mediates heterophilic cell-cell adhesion with CADM3 and NECTIN3 in a Ca(2+)-independent manner. Interaction with CRTAM promotes natural killer (NK) cell cytotoxicity and interferon-gamma (IFN-gamma) secretion by CD8+ cells in vitro as well as NK cell-mediated rejection of tumors expressing CADM1 in vivo. In mast cells, may mediate attachment to and promote communication with nerves. CADM1, together with MITF, is essential for development and survival of mast cells in vivo. By interacting with CRTAM and thus promoting the adhesion between CD8+ T-cells and CD8+ dendritic cells, regulates the retention of activated CD8+ T-cell within the draining lymph node. Required for the intestinal retention of intraepithelial CD4+ CD8+ T-cells and, to a lesser extent, intraepithelial and lamina propria CD8+ T-cells and CD4+ T-cells. Interaction with CRTAM promotes the adhesion to gut-associated CD103+ dendritic cells, which may facilitate the expression of gut-homing and adhesion molecules on T-cells and the conversion of CD4+ T-cells into CD4+ CD8+ T-cells. Acts as a synaptic cell adhesion molecule and plays a role in the formation of dendritic spines and in synapse assembly. May be involved in neuronal migration, axon growth, pathfinding, and fasciculation on the axons of differentiating neurons. May play diverse roles in the spermatogenesis including in the adhesion of spermatocytes and spermatids to Sertoli cells and for their normal differentiation into mature spermatozoa. Acts as a tumor suppressor in non-small-cell lung cancer (NSCLC) cells. May contribute to the less invasive phenotypes of lepidic growth tumor cells. (Microbial infection) Induces cell fusion in neuron infected by a neuropathogenic strain of measles. Interacts with measles hemagglutinin to trigger hyperfusogenic F-mediated membrane fusion and presumably transsynaptic cell-to-cell transmission of the virus. The sequence is that of Cell adhesion molecule 1 from Homo sapiens (Human).